The chain runs to 213 residues: RNA polymerase I subunit H (213 aa).

A compositionally biased stretch (basic and acidic residues) spans 1 to 19; sequence MVERMKKDTGDETKTKVQE. Residues 1-70 are disordered; that stretch reads MVERMKKDTG…AREFTDKPWR (70 aa). A compositionally biased stretch (pro residues) spans 21-31; sequence PPSPSPPPPPP. Basic and acidic residues-rich tracts occupy residues 43-53 and 60-69; these read VPEREKKQIER and HAREFTDKPW.

As to expression, expressed during spermatogenesis, initially at pachytene stage with abundance increasing in round spermatids and decreasing again during spermatid elongation.

In terms of biological role, may be involved in male sterility. This Mus musculus (Mouse) protein is RNA polymerase I subunit H.